Here is a 392-residue protein sequence, read N- to C-terminus: ATP phosphoribosyltransferase regulatory subunit (392 aa).

Belongs to the class-II aminoacyl-tRNA synthetase family. HisZ subfamily. In terms of assembly, heteromultimer composed of HisG and HisZ subunits.

It localises to the cytoplasm. It functions in the pathway amino-acid biosynthesis; L-histidine biosynthesis; L-histidine from 5-phospho-alpha-D-ribose 1-diphosphate: step 1/9. Functionally, required for the first step of histidine biosynthesis. May allow the feedback regulation of ATP phosphoribosyltransferase activity by histidine. The protein is ATP phosphoribosyltransferase regulatory subunit of Prochlorococcus marinus (strain MIT 9303).